The primary structure comprises 176 residues: Shikimate kinase (176 aa).

10–15 serves as a coordination point for ATP; the sequence is TSGKSS. Ser-14 contributes to the Mg(2+) binding site. Positions 32, 81, and 138 each coordinate substrate.

It belongs to the shikimate kinase family. In terms of assembly, monomer. Mg(2+) is required as a cofactor.

It localises to the cytoplasm. The enzyme catalyses shikimate + ATP = 3-phosphoshikimate + ADP + H(+). It functions in the pathway metabolic intermediate biosynthesis; chorismate biosynthesis; chorismate from D-erythrose 4-phosphate and phosphoenolpyruvate: step 5/7. Its function is as follows. Catalyzes the specific phosphorylation of the 3-hydroxyl group of shikimic acid using ATP as a cosubstrate. The sequence is that of Shikimate kinase from Chlamydia pneumoniae (Chlamydophila pneumoniae).